The sequence spans 106 residues: NADH dehydrogenase [ubiquinone] iron-sulfur protein 5 (106 aa).

One can recognise a CHCH domain in the interval 30 to 74 (PSRCHAFEKEWIECAHGIGSIRAEKECKIEFEDFRECLLRQKTMK). 2 consecutive short sequence motifs (cx9C motif) follow at residues 33-43 (CHAFEKEWIEC) and 56-66 (CKIEFEDFREC). 2 disulfides stabilise this stretch: Cys-33–Cys-66 and Cys-43–Cys-56. Positions 84–106 (EKLIKEGKYTPPPHHSGQEEPRS) are disordered.

Belongs to the complex I NDUFS5 subunit family. As to quaternary structure, mammalian complex I is composed of 45 different subunits. This is a component of the iron-sulfur (IP) fragment of the enzyme.

It is found in the mitochondrion inner membrane. Its subcellular location is the mitochondrion intermembrane space. Its function is as follows. Accessory subunit of the mitochondrial membrane respiratory chain NADH dehydrogenase (Complex I), that is believed not to be involved in catalysis. Complex I functions in the transfer of electrons from NADH to the respiratory chain. The immediate electron acceptor for the enzyme is believed to be ubiquinone. The protein is NADH dehydrogenase [ubiquinone] iron-sulfur protein 5 (NDUFS5) of Bos taurus (Bovine).